A 375-amino-acid polypeptide reads, in one-letter code: Chaperone protein DnaJ (375 aa).

A J domain is found at 5-69; sequence DYYEVLGVSK…QKRAQYDQFG (65 aa). The CR-type zinc-finger motif lies at 132–214; the sequence is GKETIIEIPR…CGGTGKVKKR (83 aa). The Zn(2+) site is built by cysteine 145, cysteine 148, cysteine 162, cysteine 165, cysteine 188, cysteine 191, cysteine 202, and cysteine 205. 4 CXXCXGXG motif repeats span residues 145 to 152, 162 to 169, 188 to 195, and 202 to 209; these read CETCKGSG, CSHCGGSG, CHHCEGTG, and CSDCGGTG.

Belongs to the DnaJ family. As to quaternary structure, homodimer. Zn(2+) is required as a cofactor.

The protein localises to the cytoplasm. Its function is as follows. Participates actively in the response to hyperosmotic and heat shock by preventing the aggregation of stress-denatured proteins and by disaggregating proteins, also in an autonomous, DnaK-independent fashion. Unfolded proteins bind initially to DnaJ; upon interaction with the DnaJ-bound protein, DnaK hydrolyzes its bound ATP, resulting in the formation of a stable complex. GrpE releases ADP from DnaK; ATP binding to DnaK triggers the release of the substrate protein, thus completing the reaction cycle. Several rounds of ATP-dependent interactions between DnaJ, DnaK and GrpE are required for fully efficient folding. Also involved, together with DnaK and GrpE, in the DNA replication of plasmids through activation of initiation proteins. The polypeptide is Chaperone protein DnaJ (Bacillus velezensis (strain DSM 23117 / BGSC 10A6 / LMG 26770 / FZB42) (Bacillus amyloliquefaciens subsp. plantarum)).